We begin with the raw amino-acid sequence, 443 residues long: MSTTPATPKVGFVSLGCPKALVDSERILTQLRMEGYEVVPTYEDADVVVVNTCGFIDSAKAESLEVIGEAIKENGKVIVTGCMGVEEGSIRDVHPSVLSVTGPQQYEQVVNAVHEVVPPRQDHNPLIDLVPPQGVKLTPRHYAYLKISEGCNHSCSFCIIPSMRGKLVSRPVGEVLSEAERLVKAGVKEILVISQDTSAYGVDVKYKTDFWNGRPVKTRMLELCEALSSLGAWVRLHYVYPYPNVDDVIPLMAAGKILPYLDIPFQHASPKVLKSMKRPAFEDRTLARIKNWREQCPELVIRSTFIVGFPGETEEDFQYLLDWLTEAQLDRVGCFQYSPVEGAPANDLGLEEVPDDVKQERWDRFMAHQQAISSARLQLRIGKEIEVLIDEVEEQGSVGRSFFDAPEIDGSVFIDGDHGLKPGDKVRCRVVDADEYDMWAEPV.

Residues 8–118 enclose the MTTase N-terminal domain; sequence PKVGFVSLGC…VVNAVHEVVP (111 aa). [4Fe-4S] cluster contacts are provided by C17, C53, C82, C151, C155, and C158. A Radical SAM core domain is found at 137–376; the sequence is LTPRHYAYLK…AHQQAISSAR (240 aa). One can recognise a TRAM domain in the interval 378-443; that stretch reads QLRIGKEIEV…DEYDMWAEPV (66 aa).

It belongs to the methylthiotransferase family. RimO subfamily. It depends on [4Fe-4S] cluster as a cofactor.

It is found in the cytoplasm. The enzyme catalyses L-aspartate(89)-[ribosomal protein uS12]-hydrogen + (sulfur carrier)-SH + AH2 + 2 S-adenosyl-L-methionine = 3-methylsulfanyl-L-aspartate(89)-[ribosomal protein uS12]-hydrogen + (sulfur carrier)-H + 5'-deoxyadenosine + L-methionine + A + S-adenosyl-L-homocysteine + 2 H(+). In terms of biological role, catalyzes the methylthiolation of an aspartic acid residue of ribosomal protein uS12. The polypeptide is Ribosomal protein uS12 methylthiotransferase RimO (Pseudomonas putida (strain W619)).